The following is a 938-amino-acid chain: Isoleucine--tRNA ligase (938 aa).

A 'HIGH' region motif is present at residues 58–68; sequence PYANGNIHIGH. Glutamate 562 is an L-isoleucyl-5'-AMP binding site. The 'KMSKS' region signature appears at 603 to 607; that stretch reads KMSKS. Position 606 (lysine 606) interacts with ATP. 4 residues coordinate Zn(2+): cysteine 901, cysteine 904, cysteine 921, and cysteine 924.

Belongs to the class-I aminoacyl-tRNA synthetase family. IleS type 1 subfamily. In terms of assembly, monomer. The cofactor is Zn(2+).

The protein resides in the cytoplasm. The enzyme catalyses tRNA(Ile) + L-isoleucine + ATP = L-isoleucyl-tRNA(Ile) + AMP + diphosphate. In terms of biological role, catalyzes the attachment of isoleucine to tRNA(Ile). As IleRS can inadvertently accommodate and process structurally similar amino acids such as valine, to avoid such errors it has two additional distinct tRNA(Ile)-dependent editing activities. One activity is designated as 'pretransfer' editing and involves the hydrolysis of activated Val-AMP. The other activity is designated 'posttransfer' editing and involves deacylation of mischarged Val-tRNA(Ile). The protein is Isoleucine--tRNA ligase of Actinobacillus pleuropneumoniae serotype 7 (strain AP76).